Here is a 305-residue protein sequence, read N- to C-terminus: UDP-3-O-acyl-N-acetylglucosamine deacetylase (305 aa).

Zn(2+) is bound by residues His78, His237, and Asp241. The active-site Proton donor is His264.

The protein belongs to the LpxC family. Zn(2+) serves as cofactor.

It carries out the reaction a UDP-3-O-[(3R)-3-hydroxyacyl]-N-acetyl-alpha-D-glucosamine + H2O = a UDP-3-O-[(3R)-3-hydroxyacyl]-alpha-D-glucosamine + acetate. It participates in glycolipid biosynthesis; lipid IV(A) biosynthesis; lipid IV(A) from (3R)-3-hydroxytetradecanoyl-[acyl-carrier-protein] and UDP-N-acetyl-alpha-D-glucosamine: step 2/6. Catalyzes the hydrolysis of UDP-3-O-myristoyl-N-acetylglucosamine to form UDP-3-O-myristoylglucosamine and acetate, the committed step in lipid A biosynthesis. In Burkholderia ambifaria (strain ATCC BAA-244 / DSM 16087 / CCUG 44356 / LMG 19182 / AMMD) (Burkholderia cepacia (strain AMMD)), this protein is UDP-3-O-acyl-N-acetylglucosamine deacetylase.